Consider the following 144-residue polypeptide: Maximins 3/H11 type 2 (144 aa).

An N-terminal signal peptide occupies residues 1 to 18; sequence MHFKYIVAVSFLIASAYA. Propeptides lie at residues 19-43 and 73-122; these read RSVQ…REIR and RTAE…KKEK. Isoleucine 143 is subject to Isoleucine amide.

This sequence belongs to the bombinin family. In terms of tissue distribution, expressed by the skin glands.

Its subcellular location is the secreted. Functionally, maximin-3 shows antibacterial activity against both Gram-positive and Gram-negative bacteria. It also shows antimicrobial activity against the fungus C.albicans, but not against A.flavus nor P.uticale. It has little hemolytic activity. It possess a significant cytotoxicity against tumor cell lines. It possess a significant anti-HIV activity. It shows high spermicidal activity. In terms of biological role, maximin-H11 shows antimicrobial activity against bacteria and against the fungus C.albicans. Shows strong hemolytic activity. This Bombina maxima (Giant fire-bellied toad) protein is Maximins 3/H11 type 2.